Here is a 1092-residue protein sequence, read N- to C-terminus: DNA polymerase delta catalytic subunit (1092 aa).

Positions 1 to 71 (MDGKRKFNGT…SRPPPPELDP (71 aa)) are disordered. The Nuclear localization signal motif lies at 4–19 (KRKFNGTSNGHAKKPR). Zn(2+)-binding residues include Cys997, Cys1000, Cys1014, and Cys1017. The CysA-type zinc-finger motif lies at 997-1017 (CLGCKSLMPKGYEQACLCPHC). [4Fe-4S] cluster-binding residues include Cys1046, Cys1049, Cys1059, and Cys1064. Residues 1046 to 1064 (CQRCQESLHEEVICSNRDC) carry the CysB motif motif.

The protein belongs to the DNA polymerase type-B family. Catalytic component of the DNA polymerase delta complex consisting of three subunits: the catalytic subunit PolD1 and two accessory subunits PolD2/Pol31 and PolD3/Pol32. Within the delta complex, interacts with both PolD2 and PolD3, and is able to interact with PolD2 in the absence of PolD3. Interacts with PCNA and PCNA2. [4Fe-4S] cluster is required as a cofactor. Requires Mg(2+) as cofactor. As to expression, expressed in ovaries (at the protein level). Expressed in embryos (at the protein level).

Its subcellular location is the nucleus. The protein resides in the nucleoplasm. It catalyses the reaction DNA(n) + a 2'-deoxyribonucleoside 5'-triphosphate = DNA(n+1) + diphosphate. Its activity is regulated as follows. Inhibited by KCL. Also inhibited by carbonyldiphosphonate, aphidicolin and N-ethylmaleimide (NEM). In terms of biological role, as the catalytic component of the DNA polymerase delta complex, plays a crucial role in high fidelity genome replication, including lagging strand synthesis, DNA recombination and repair. Exhibits both DNA polymerase and 3'- to 5'-exonuclease activities. Required at the nucleus of rapidly dividing embryonic cells to activate genome replication during the earliest cell cycles. Likely to require the presence of accessory proteins PolD2 and PolD3 for full activity. The polypeptide is DNA polymerase delta catalytic subunit (Drosophila melanogaster (Fruit fly)).